The following is a 92-amino-acid chain: Small ribosomal subunit protein uS19 (92 aa).

The protein belongs to the universal ribosomal protein uS19 family.

Its function is as follows. Protein S19 forms a complex with S13 that binds strongly to the 16S ribosomal RNA. The polypeptide is Small ribosomal subunit protein uS19 (Streptococcus agalactiae serotype Ia (strain ATCC 27591 / A909 / CDC SS700)).